Here is a 248-residue protein sequence, read N- to C-terminus: 5'-nucleotidase SurE (248 aa).

A divalent metal cation-binding residues include aspartate 8, aspartate 9, serine 39, and asparagine 91.

The protein belongs to the SurE nucleotidase family. Requires a divalent metal cation as cofactor.

The protein resides in the cytoplasm. It carries out the reaction a ribonucleoside 5'-phosphate + H2O = a ribonucleoside + phosphate. Its function is as follows. Nucleotidase that shows phosphatase activity on nucleoside 5'-monophosphates. The polypeptide is 5'-nucleotidase SurE (Citrifermentans bemidjiense (strain ATCC BAA-1014 / DSM 16622 / JCM 12645 / Bem) (Geobacter bemidjiensis)).